The primary structure comprises 229 residues: 7-cyano-7-deazaguanine synthase (229 aa).

8–18 (CSGGLDSSVIA) is an ATP binding site. Zn(2+)-binding residues include C190, C203, C206, and C209.

The protein belongs to the QueC family. Zn(2+) is required as a cofactor.

The enzyme catalyses 7-carboxy-7-deazaguanine + NH4(+) + ATP = 7-cyano-7-deazaguanine + ADP + phosphate + H2O + H(+). Its pathway is purine metabolism; 7-cyano-7-deazaguanine biosynthesis. Functionally, catalyzes the ATP-dependent conversion of 7-carboxy-7-deazaguanine (CDG) to 7-cyano-7-deazaguanine (preQ(0)). In Methanopyrus kandleri (strain AV19 / DSM 6324 / JCM 9639 / NBRC 100938), this protein is 7-cyano-7-deazaguanine synthase.